The sequence spans 571 residues: Cyclic di-GMP phosphodiesterase TpdA (571 aa).

Transmembrane regions (helical) follow at residues 155 to 175 (IAWV…YAIN), 321 to 341 (VYYI…FLVI), and 395 to 415 (TLIS…AIYA). Residues 344–571 (HRSLQAFITY…HQGYFYPLHF (228 aa)) enclose the EAL domain.

The protein localises to the cell inner membrane. It carries out the reaction 3',3'-c-di-GMP + H2O = 5'-phosphoguanylyl(3'-&gt;5')guanosine + H(+). Cyclic di-GMP phosphodiesterase that plays an important role in modulating the global c-di-GMP pool. Its ability to alter the c-di-GMP pool has an effect on swimming motility, swarming motility and biofilm formation, multicellular behaviors that are important for the survival and dissemination of this environmental pathogen. Exhibits a dual function, namely, c-di-GMP degradation and modulation of its own expression. This is Cyclic di-GMP phosphodiesterase TpdA from Vibrio parahaemolyticus serotype O3:K6 (strain RIMD 2210633).